Here is a 145-residue protein sequence, read N- to C-terminus: Hemoglobin subunit beta-2 (145 aa).

The Globin domain maps to 2-145 (HLTDQEIKYI…VADAVGKGYH (144 aa)). His-63 and His-91 together coordinate heme b.

Belongs to the globin family. In terms of tissue distribution, red blood cells.

This chain is Hemoglobin subunit beta-2, found in Telmatobius peruvianus (Andean frog).